Consider the following 72-residue polypeptide: DNA-directed RNA polymerase subunit omega (72 aa).

This sequence belongs to the RNA polymerase subunit omega family. In terms of assembly, the RNAP catalytic core consists of 2 alpha, 1 beta, 1 beta' and 1 omega subunit. When a sigma factor is associated with the core the holoenzyme is formed, which can initiate transcription.

It catalyses the reaction RNA(n) + a ribonucleoside 5'-triphosphate = RNA(n+1) + diphosphate. Promotes RNA polymerase assembly. Latches the N- and C-terminal regions of the beta' subunit thereby facilitating its interaction with the beta and alpha subunits. This chain is DNA-directed RNA polymerase subunit omega, found in Francisella philomiragia subsp. philomiragia (strain ATCC 25017 / CCUG 19701 / FSC 153 / O#319-036).